Here is a 52-residue protein sequence, read N- to C-terminus: Large ribosomal subunit protein bL33 (52 aa).

The protein belongs to the bacterial ribosomal protein bL33 family.

This Campylobacter jejuni subsp. doylei (strain ATCC BAA-1458 / RM4099 / 269.97) protein is Large ribosomal subunit protein bL33.